The primary structure comprises 268 residues: Embryonic abundant protein USP92 (268 aa).

The N-terminal stretch at 1–22 is a signal peptide; sequence MEFAHLTVLSLFCLAFVGITAT. A run of 5 repeats spans residues 50-55, 83-88, 101-106, 166-183, and 202-222. Positions 50–106 are 3 X 6 AA approximate repeats; that stretch reads GKTNSLPIKSEELKQYSTLFFEHDLHPRKNFILGNTNSVGSIIRPFTKSRQGVTDSI. The region spanning 68–259 is the BURP domain; sequence LFFEHDLHPR…GNKAAAWVPN (192 aa). Positions 166-222 are 2 X approximate repeats; that stretch reads YVVEDVKKVGDNAVMCHRLNFEKVVFNCHQVRETTAYVVSLVASDGTKTKALTVCHH. Asparagine 259 carries N-linked (GlcNAc...) asparagine glycosylation.

In terms of tissue distribution, seed.

The polypeptide is Embryonic abundant protein USP92 (Vicia faba (Broad bean)).